The chain runs to 206 residues: Small ribosomal subunit protein uS4 (206 aa).

The S4 RNA-binding domain occupies 96–156 (GRLDNVVYRM…EKAKKQSRVK (61 aa)).

It belongs to the universal ribosomal protein uS4 family. Part of the 30S ribosomal subunit. Contacts protein S5. The interaction surface between S4 and S5 is involved in control of translational fidelity.

Its function is as follows. One of the primary rRNA binding proteins, it binds directly to 16S rRNA where it nucleates assembly of the body of the 30S subunit. Functionally, with S5 and S12 plays an important role in translational accuracy. This is Small ribosomal subunit protein uS4 from Enterobacter sp. (strain 638).